A 727-amino-acid polypeptide reads, in one-letter code: Catalase-peroxidase (727 aa).

A cross-link (tryptophyl-tyrosyl-methioninium (Trp-Tyr) (with M-244)) is located at residues 95-218 (WHSAGTYRII…LAAVQMGLIY (124 aa)). The active-site Proton acceptor is the His96. The segment at residues 218–244 (YVNPEGPNGEPDVLGAAKDIKESFGKM) is a cross-link (tryptophyl-tyrosyl-methioninium (Tyr-Met) (with W-95)). His259 provides a ligand contact to heme b.

This sequence belongs to the peroxidase family. Peroxidase/catalase subfamily. In terms of assembly, homodimer or homotetramer. Heme b is required as a cofactor. In terms of processing, formation of the three residue Trp-Tyr-Met cross-link is important for the catalase, but not the peroxidase activity of the enzyme.

It catalyses the reaction H2O2 + AH2 = A + 2 H2O. It carries out the reaction 2 H2O2 = O2 + 2 H2O. Functionally, bifunctional enzyme with both catalase and broad-spectrum peroxidase activity. The polypeptide is Catalase-peroxidase (Persephonella marina (strain DSM 14350 / EX-H1)).